Here is a 443-residue protein sequence, read N- to C-terminus: Signal recognition particle 54 kDa protein (443 aa).

Residues 107–114, 189–193, and 247–250 each bind GTP; these read GVQGSGKT, DTAGR, and TKLD.

It belongs to the GTP-binding SRP family. SRP54 subfamily. As to quaternary structure, part of the signal recognition particle protein translocation system, which is composed of SRP and FtsY. Archaeal SRP consists of a 7S RNA molecule of 300 nucleotides and two protein subunits: SRP54 and SRP19.

It localises to the cytoplasm. The catalysed reaction is GTP + H2O = GDP + phosphate + H(+). Functionally, involved in targeting and insertion of nascent membrane proteins into the cytoplasmic membrane. Binds to the hydrophobic signal sequence of the ribosome-nascent chain (RNC) as it emerges from the ribosomes. The SRP-RNC complex is then targeted to the cytoplasmic membrane where it interacts with the SRP receptor FtsY. The sequence is that of Signal recognition particle 54 kDa protein from Pyrococcus abyssi (strain GE5 / Orsay).